A 393-amino-acid polypeptide reads, in one-letter code: Homeobox protein knotted-1-like 4 (393 aa).

Residues 1-13 (MAFHNNHFNHFTD) are compositionally biased toward polar residues. Disordered stretches follow at residues 1–39 (MAFH…PPNW) and 81–114 (QRGN…EKKE). In terms of domain architecture, ELK spans 286–306 (ELKHELKQGYKEKIVDIREEI). The segment at residues 307 to 370 (LRKRRAGKLP…NQRKRNWHSN (64 aa)) is a DNA-binding region (homeobox; TALE-type). The segment at 363–393 (RKRNWHSNPSSSTVSKNKRRSNAGENSGRDR) is disordered. A compositionally biased stretch (polar residues) spans 368-377 (HSNPSSSTVS).

Belongs to the TALE/KNOX homeobox family. As to quaternary structure, may form heterodimeric complex with the TALE/BELL proteins. Interacts with OFP1, OFP2, OFP4 and OFP12. Interacts with KNATM-B.

The protein resides in the nucleus. This is Homeobox protein knotted-1-like 4 (KNAT4) from Arabidopsis thaliana (Mouse-ear cress).